A 441-amino-acid chain; its full sequence is Maltokinase (441 aa).

Belongs to the aminoglycoside phosphotransferase family. In terms of assembly, monomer.

The catalysed reaction is D-maltose + ATP = alpha-maltose 1-phosphate + ADP + H(+). The protein operates within glycan biosynthesis; glycogen biosynthesis. Functionally, catalyzes the ATP-dependent phosphorylation of maltose to maltose 1-phosphate. Is involved in a branched alpha-glucan biosynthetic pathway from trehalose, together with TreS, GlgE and GlgB. The protein is Maltokinase (mak) of Mycolicibacterium vanbaalenii (strain DSM 7251 / JCM 13017 / BCRC 16820 / KCTC 9966 / NRRL B-24157 / PYR-1) (Mycobacterium vanbaalenii).